Reading from the N-terminus, the 339-residue chain is Anthranilate phosphoribosyltransferase (339 aa).

Residues glycine 81, 84 to 85 (GD), 91 to 94 (NIST), 109 to 117 (KHGNRAASS), and serine 121 contribute to the 5-phospho-alpha-D-ribose 1-diphosphate site. An anthranilate-binding site is contributed by glycine 81. A Mg(2+)-binding site is contributed by serine 93. Position 112 (asparagine 112) interacts with anthranilate. Residue arginine 167 participates in anthranilate binding. Positions 226 and 227 each coordinate Mg(2+).

Belongs to the anthranilate phosphoribosyltransferase family. Homodimer. Mg(2+) is required as a cofactor.

It carries out the reaction N-(5-phospho-beta-D-ribosyl)anthranilate + diphosphate = 5-phospho-alpha-D-ribose 1-diphosphate + anthranilate. It functions in the pathway amino-acid biosynthesis; L-tryptophan biosynthesis; L-tryptophan from chorismate: step 2/5. Functionally, catalyzes the transfer of the phosphoribosyl group of 5-phosphorylribose-1-pyrophosphate (PRPP) to anthranilate to yield N-(5'-phosphoribosyl)-anthranilate (PRA). The protein is Anthranilate phosphoribosyltransferase of Maricaulis maris (strain MCS10) (Caulobacter maris).